We begin with the raw amino-acid sequence, 208 residues long: Outer-membrane lipoprotein carrier protein (208 aa).

Positions 1–21 are cleaved as a signal peptide; the sequence is MKRTATLLVVALILALNTAQA.

Belongs to the LolA family. As to quaternary structure, monomer.

The protein resides in the periplasm. Its function is as follows. Participates in the translocation of lipoproteins from the inner membrane to the outer membrane. Only forms a complex with a lipoprotein if the residue after the N-terminal Cys is not an aspartate (The Asp acts as a targeting signal to indicate that the lipoprotein should stay in the inner membrane). The polypeptide is Outer-membrane lipoprotein carrier protein (Halorhodospira halophila (strain DSM 244 / SL1) (Ectothiorhodospira halophila (strain DSM 244 / SL1))).